Reading from the N-terminus, the 351-residue chain is Trans-enoyl reductase grgB (351 aa).

In terms of domain architecture, Enoyl reductase (ER) spans 10–346 (GAESGGYRLA…GKVHAKKLVV (337 aa)). Residues 161–164 (ATAT), 184–187 (SPAN), Tyr202, 249–250 (LE), and 339–340 (VH) contribute to the NADP(+) site.

The protein belongs to the zinc-containing alcohol dehydrogenase family.

Its pathway is secondary metabolite biosynthesis. In terms of biological role, trans-enoyl reductase; part of the gene cluster that mediates the biosynthesis of gregatin A, a fungal polyketide featuring an alkylated furanone core. The PKS grgA synthesizes C11 and C4 polyketide chains in the presence and absence of the trans-enoyl reductase grgB, respectively. The polyketide transferase grgF is then responsible for the fusion of the two carbon chains to produce the furanone skeleton of gregatin A. Next, the cytochrome P450 monooxygenase grgG accepts performs the oxidative cyclization to furnish the gregatin scaffold and leads to the formation of desmethylgregatin A. Finally, the O-methyltransferase grgD methylates the carboxyl group of desmethylgregatin A to provide gregatin A. In Penicillium sp, this protein is Trans-enoyl reductase grgB.